We begin with the raw amino-acid sequence, 617 residues long: MPTVVNPPRDPNTLSNYNNWVSTHITANFDILFDQRKLAGSVIHQFRSTTHGESNHIILDTNHLDIGSVKVNGQPSEWEYLPRLEPYGTPLKIKLDQGVKLNEMIEVDISVKTTEKCTALQWLTPAQTSNKKHPYMFSQCQAIHARSIFPCQDTPDVKCTLDFNITSPLPVIASGLPVRGSSEAPKSDGKTLYKFHQKVPIPSYLFALASGDISEAPIGPRSVVATSPDKLGECQWELEADTEKFINAIEKIVYPYVWGEYNVLILPPSFPYGGMENPIFTFATPSIISKDRENIDVIAHELAHSWSGNLVTNASWEHFWLNEGWTTYLERRIVAAVHGEPYRHFSAIIGWKALTDSVEHFGPEHDFTKLITNLKGMDPDDAFSSIPYEKGFNFLFHLENLVGKSKFDLFIPHYFNKYKGKSLDSYEFKSTILDFFKDDSEASTALNELDWDSWFYAPGLPPKPDFDTSLVDVVYDLAKKWLSLPNSSFKPQPEDIRGLTANQVVVFLEQILVSERQLTPELSKLMGEIYGLAASQNIEVANLYFQVGLQAGDASVLEPTADLLGKIGRMKFVRPLYRKLAKFDRKRAVETFEKHRDFYHPICRAMVEKDLFGKKDE.

A peptide contacts are provided by residues 139–141 (QCQ) and 271–276 (PYGGME). His-300 serves as a coordination point for Zn(2+). Catalysis depends on Glu-301, which acts as the Proton acceptor. The Zn(2+) site is built by His-304 and Glu-323. Residue Tyr-388 is the Proton donor of the active site.

The protein belongs to the peptidase M1 family. Requires Zn(2+) as cofactor.

It localises to the cytoplasm. It is found in the nucleus. The catalysed reaction is an epoxide + H2O = an ethanediol. Its function is as follows. Aminopeptidase that preferentially cleaves di- and tripeptides. Also has low epoxide hydrolase activity (in vitro). Can hydrolyze the epoxide leukotriene LTA(4) but it forms preferentially 5,6-dihydroxy-7,9,11,14-eicosatetraenoic acid rather than the cytokine leukotriene B(4) as the product compared to the homologous mammalian enzyme (in vitro). This is Leucine aminopeptidase 2 from Neosartorya fischeri (strain ATCC 1020 / DSM 3700 / CBS 544.65 / FGSC A1164 / JCM 1740 / NRRL 181 / WB 181) (Aspergillus fischerianus).